The primary structure comprises 522 residues: GMP synthase [glutamine-hydrolyzing] (522 aa).

The region spanning 9–204 (KILILDFGAQ…VVDICGCQML (196 aa)) is the Glutamine amidotransferase type-1 domain. Cys86 acts as the Nucleophile in catalysis. Active-site residues include His178 and Glu180. The 193-residue stretch at 205–397 (WTAANIIEDQ…LGLPHAMVYR (193 aa)) folds into the GMPS ATP-PPase domain. Residue 232-238 (SGGVDSS) coordinates ATP.

Homodimer.

The enzyme catalyses XMP + L-glutamine + ATP + H2O = GMP + L-glutamate + AMP + diphosphate + 2 H(+). The protein operates within purine metabolism; GMP biosynthesis; GMP from XMP (L-Gln route): step 1/1. Catalyzes the synthesis of GMP from XMP. The polypeptide is GMP synthase [glutamine-hydrolyzing] (guaA) (Xylella fastidiosa (strain 9a5c)).